A 543-amino-acid polypeptide reads, in one-letter code: Glutamyl-tRNA(Gln) amidotransferase subunit A, chloroplastic/mitochondrial (543 aa).

Catalysis depends on charge relay system residues K123 and S198. S222 (acyl-ester intermediate) is an active-site residue.

This sequence belongs to the amidase family. GatA subfamily. Subunit of the heterotrimeric GatCAB amidotransferase (AdT) complex, composed of A, B and C subunits.

Its subcellular location is the mitochondrion. The protein resides in the plastid. It is found in the chloroplast stroma. It catalyses the reaction L-glutamyl-tRNA(Gln) + L-glutamine + ATP + H2O = L-glutaminyl-tRNA(Gln) + L-glutamate + ADP + phosphate + H(+). Functionally, allows the formation of correctly charged Gln-tRNA(Gln) through the transamidation of misacylated Glu-tRNA(Gln) in chloroplasts and mitochondria. The reaction takes place in the presence of glutamine and ATP through an activated gamma-phospho-Glu-tRNA(Gln). In Oryza sativa subsp. japonica (Rice), this protein is Glutamyl-tRNA(Gln) amidotransferase subunit A, chloroplastic/mitochondrial.